We begin with the raw amino-acid sequence, 386 residues long: Heat-inducible transcription repressor HrcA (386 aa).

It belongs to the HrcA family.

In terms of biological role, negative regulator of class I heat shock genes (grpE-dnaK-dnaJ and groELS operons). Prevents heat-shock induction of these operons. The chain is Heat-inducible transcription repressor HrcA from Chlamydia abortus (strain DSM 27085 / S26/3) (Chlamydophila abortus).